A 718-amino-acid polypeptide reads, in one-letter code: Amino-acid acetyltransferase, mitochondrial (718 aa).

The transit peptide at 1–36 (MNPNAVWPRTAQSSLKKHQVSLCTCQRRSHYRLRSF) directs the protein to the mitochondrion. The tract at residues 97–116 (QHQPDLPQKPTSAPASTAKI) is disordered. The 170-residue stretch at 539-708 (RQPRLRLDDP…YEAVCRSIQP (170 aa)) folds into the N-acetyltransferase domain.

Belongs to the acetyltransferase family.

The protein resides in the mitochondrion. The catalysed reaction is L-glutamate + acetyl-CoA = N-acetyl-L-glutamate + CoA + H(+). It functions in the pathway amino-acid biosynthesis; L-arginine biosynthesis; N(2)-acetyl-L-ornithine from L-glutamate: step 1/4. Its function is as follows. N-acetylglutamate synthase involved in arginine biosynthesis. In Aspergillus clavatus (strain ATCC 1007 / CBS 513.65 / DSM 816 / NCTC 3887 / NRRL 1 / QM 1276 / 107), this protein is Amino-acid acetyltransferase, mitochondrial (arg2).